Consider the following 230-residue polypeptide: UPF0173 metal-dependent hydrolase SPO2976 (230 aa).

It belongs to the UPF0173 family.

The chain is UPF0173 metal-dependent hydrolase SPO2976 from Ruegeria pomeroyi (strain ATCC 700808 / DSM 15171 / DSS-3) (Silicibacter pomeroyi).